We begin with the raw amino-acid sequence, 689 residues long: UvrABC system protein B (689 aa).

The interval 1–26 (MSDASGPLQPDRPEADVPFRVEAPFD) is disordered. One can recognise a Helicase ATP-binding domain in the interval 40 to 422 (AGYEQGAQQQ…ERAQSANVVE (383 aa)). Residue 53–60 (GVTGSGKT) coordinates ATP. The short motif at 106–129 (YYNYYQPEAYVEQTDKYIEKDASI) is the Beta-hairpin element. Residues 443 to 605 (QVEDLMDRID…TTPTTIEKAV (163 aa)) enclose the Helicase C-terminal domain. A UVR domain is found at 632 to 667 (ALLVEDLEARMEDAASNLEFELAADIRDRMRELREA). The tract at residues 668–689 (FDLDGGDAPEDPGGVAPETEDW) is disordered.

The protein belongs to the UvrB family. As to quaternary structure, forms a heterotetramer with UvrA during the search for lesions. Interacts with UvrC in an incision complex.

The protein resides in the cytoplasm. Its function is as follows. The UvrABC repair system catalyzes the recognition and processing of DNA lesions. A damage recognition complex composed of 2 UvrA and 2 UvrB subunits scans DNA for abnormalities. Upon binding of the UvrA(2)B(2) complex to a putative damaged site, the DNA wraps around one UvrB monomer. DNA wrap is dependent on ATP binding by UvrB and probably causes local melting of the DNA helix, facilitating insertion of UvrB beta-hairpin between the DNA strands. Then UvrB probes one DNA strand for the presence of a lesion. If a lesion is found the UvrA subunits dissociate and the UvrB-DNA preincision complex is formed. This complex is subsequently bound by UvrC and the second UvrB is released. If no lesion is found, the DNA wraps around the other UvrB subunit that will check the other stand for damage. The protein is UvrABC system protein B of Halobacterium salinarum (strain ATCC 700922 / JCM 11081 / NRC-1) (Halobacterium halobium).